The following is a 181-amino-acid chain: Adenine phosphoribosyltransferase (181 aa).

The protein belongs to the purine/pyrimidine phosphoribosyltransferase family. As to quaternary structure, homodimer.

It is found in the cytoplasm. The enzyme catalyses AMP + diphosphate = 5-phospho-alpha-D-ribose 1-diphosphate + adenine. Its pathway is purine metabolism; AMP biosynthesis via salvage pathway; AMP from adenine: step 1/1. Functionally, catalyzes a salvage reaction resulting in the formation of AMP, that is energically less costly than de novo synthesis. This is Adenine phosphoribosyltransferase from Neorhizobium galegae (Rhizobium galegae).